The primary structure comprises 100 residues: Urease subunit gamma (100 aa).

It belongs to the urease gamma subunit family. As to quaternary structure, heterotrimer of UreA (gamma), UreB (beta) and UreC (alpha) subunits. Three heterotrimers associate to form the active enzyme.

It is found in the cytoplasm. The catalysed reaction is urea + 2 H2O + H(+) = hydrogencarbonate + 2 NH4(+). It functions in the pathway nitrogen metabolism; urea degradation; CO(2) and NH(3) from urea (urease route): step 1/1. The polypeptide is Urease subunit gamma (Yersinia bercovieri).